Consider the following 671-residue polypeptide: ATP-dependent zinc metalloprotease FtsH (671 aa).

Topologically, residues 1 to 22 are cytoplasmic; that stretch reads MANPNNNNDNKQNNNNNFFNDN. The chain crosses the membrane as a helical span at residues 23 to 43; it reads PLLAFAIFSIVIILIFKSFVG. At 44–130 the chain is on the periplasmic side; the sequence is EGESLGTMMN…ISYEGVVGNG (87 aa). The helical transmembrane segment at 131 to 151 threads the bilayer; sequence FFSELISMMLPILIFFAIWIF. The Cytoplasmic segment spans residues 152–671; the sequence is LAKKMSKGMG…SEESDNNKEA (520 aa). Residue 224 to 231 participates in ATP binding; that stretch reads GPPGTGKT. Histidine 447 serves as a coordination point for Zn(2+). Glutamate 448 is a catalytic residue. Zn(2+) contacts are provided by histidine 451 and aspartate 525. Positions 630 to 671 are disordered; sequence EKGMPSRLAHKDKVAKNKAEADKKEEALKKEISEESDNNKEA.

It in the central section; belongs to the AAA ATPase family. The protein in the C-terminal section; belongs to the peptidase M41 family. As to quaternary structure, homohexamer. Requires Zn(2+) as cofactor.

Its subcellular location is the cell inner membrane. In terms of biological role, acts as a processive, ATP-dependent zinc metallopeptidase for both cytoplasmic and membrane proteins. Plays a role in the quality control of integral membrane proteins. The sequence is that of ATP-dependent zinc metalloprotease FtsH from Sulfurovum sp. (strain NBC37-1).